Consider the following 99-residue polypeptide: Small ribosomal subunit protein bS21 (99 aa).

The disordered stretch occupies residues 60–99 (KKLQREGLLPMKPKPVFGAGPGGDRRGPGAGPGAGPRPAR).

The protein belongs to the bacterial ribosomal protein bS21 family.

This chain is Small ribosomal subunit protein bS21, found in Rhodopseudomonas palustris (strain BisA53).